The following is a 263-amino-acid chain: Ribonuclease HII (263 aa).

Residues 39-257 (AFFTGIDEAG…VKPAAAPHAA (219 aa)) form the RNase H type-2 domain. A divalent metal cation is bound by residues D45, E46, and D157.

This sequence belongs to the RNase HII family. Requires Mn(2+) as cofactor. The cofactor is Mg(2+).

The protein localises to the cytoplasm. It carries out the reaction Endonucleolytic cleavage to 5'-phosphomonoester.. Endonuclease that specifically degrades the RNA of RNA-DNA hybrids. This Oleidesulfovibrio alaskensis (strain ATCC BAA-1058 / DSM 17464 / G20) (Desulfovibrio alaskensis) protein is Ribonuclease HII.